The primary structure comprises 524 residues: M-phase inducer phosphatase 1 (524 aa).

The Phosphodegron motif lies at 74–84 (MGSSESTDSGF). S76 is subject to Phosphoserine; by CHEK1. S79, S82, and S88 each carry phosphoserine; by NEK11. A Phosphoserine modification is found at S107. S124 carries the post-translational modification Phosphoserine; by CHEK1 and CHEK2. Positions 141 to 143 (KEN) match the KEN box motif. S178 bears the Phosphoserine; by CHEK1 mark. The tract at residues 264-317 (LCSSSTRSVLKRPERSQEESPPGSTKRRKSMSGASPKESTNPEKAHETLHQSLS) is disordered. A phosphoserine; by CHEK1 and CHEK2 mark is found at S279 and S293. A compositionally biased stretch (basic and acidic residues) spans 303 to 312 (TNPEKAHETL). At S321 the chain carries Phosphoserine. In terms of domain architecture, Rhodanese spans 376 to 482 (LIKEFVIIDC…FFMKCQSYCE (107 aa)). Residue C431 is part of the active site. A Phosphothreonine; by CHEK1 modification is found at T507. 2 positions are modified to phosphoserine; by PLK3: S513 and S519.

Belongs to the MPI phosphatase family. In terms of assembly, interacts with CCNB1/cyclin B1. Interacts with YWHAE/14-3-3 epsilon when phosphorylated. Interacts with CUL1 specifically when CUL1 is neddylated and active. Interacts with BTRC/BTRCP1 and FBXW11/BTRCP2. Interactions with CUL1, BTRC and FBXW11 are enhanced upon DNA damage. Interacts with CHEK2; mediates CDC25A phosphorylation and degradation in response to infrared-induced DNA damages. Interacts with HSP90AB1; prevents heat shock-mediated CDC25A degradation and contributes to cell cycle progression. Post-translationally, phosphorylated by CHEK1 on Ser-76, Ser-124, Ser-178, Ser-279, Ser-293 and Thr-507 during checkpoint mediated cell cycle arrest. Also phosphorylated by CHEK2 on Ser-124, Ser-279, and Ser-293 during checkpoint mediated cell cycle arrest. Phosphorylation on Ser-178 and Thr-507 creates binding sites for YWHAE/14-3-3 epsilon which inhibits CDC25A. Phosphorylation on Ser-76, Ser-124, Ser-178, Ser-279 and Ser-293 may also promote ubiquitin-dependent proteolysis of CDC25A by the SCF complex. Phosphorylation of CDC25A at Ser-76 by CHEK1 primes it for subsequent phosphorylation at Ser-79, Ser-82 and Ser-88 by NEK11. Phosphorylation by NEK11 is required for BTRC-mediated polyubiquitination and degradation. Phosphorylation by PIM1 leads to an increase in phosphatase activity. Phosphorylated by PLK3 following DNA damage, leading to promote its ubiquitination and degradation. In terms of processing, ubiquitinated by the anaphase promoting complex/cyclosome (APC/C) ubiquitin ligase complex that contains FZR1/CDH1 during G1 phase leading to its degradation by the proteasome. Ubiquitinated by a SCF complex containing BTRC and FBXW11 during S phase leading to its degradation by the proteasome. Deubiquitination by USP17L2/DUB3 leads to its stabilization.

It carries out the reaction O-phospho-L-tyrosyl-[protein] + H2O = L-tyrosyl-[protein] + phosphate. Stimulated by B-type cyclins. Stimulated by PIM1-mediated phosphorylation. Functionally, tyrosine protein phosphatase which functions as a dosage-dependent inducer of mitotic progression. Directly dephosphorylates CDK1 and stimulates its kinase activity. Also dephosphorylates CDK2 in complex with cyclin-E, in vitro. The sequence is that of M-phase inducer phosphatase 1 (CDC25A) from Homo sapiens (Human).